Here is a 411-residue protein sequence, read N- to C-terminus: Secretion apparatus protein BsaZ (411 aa).

4 consecutive transmembrane segments (helical) span residues 28-48 (IVALIVIATGALAAPALVDLT), 80-100 (IAAPFVLLCAAAGALPSLVQS), 137-157 (ALLYVGVFALTVRVFAGLYHA), and 175-195 (IVLTVRLVLLFLLCALPVLIL). Residues 341–411 (AANRGGPPPE…APARTGDQNA (71 aa)) are disordered. The segment covering 370–404 (DACADNAFPDDAPPGAAAPNAGSPDGPAPDGGAPA) has biased composition (low complexity).

The protein belongs to the type III secretion exporter family.

It localises to the cell membrane. Its function is as follows. Part of the bsa type III secretion system, is involved in the intracellular replication of invading bacteria inside the host cell. Probably necessary for the lysis of the vacuole membrane and escape into the host cell cytoplasm. The chain is Secretion apparatus protein BsaZ (bsaZ) from Burkholderia pseudomallei (strain 1710b).